The chain runs to 129 residues: Large ribosomal subunit protein uL22 (129 aa).

This sequence belongs to the universal ribosomal protein uL22 family. In terms of assembly, part of the 50S ribosomal subunit.

In terms of biological role, this protein binds specifically to 23S rRNA; its binding is stimulated by other ribosomal proteins, e.g. L4, L17, and L20. It is important during the early stages of 50S assembly. It makes multiple contacts with different domains of the 23S rRNA in the assembled 50S subunit and ribosome. Its function is as follows. The globular domain of the protein is located near the polypeptide exit tunnel on the outside of the subunit, while an extended beta-hairpin is found that lines the wall of the exit tunnel in the center of the 70S ribosome. This Phytoplasma sp. (strain STRAWB2) protein is Large ribosomal subunit protein uL22.